The sequence spans 444 residues: MSELSAARELDEIAHTASEGWMIAGLIGGAIVGAALIAVTGGTAAVAVAAVVAGASAGGGLGEVLGSMSWAPRHVTGVLADGSPNVYINGRPAIRAHISTGECSEDGPAKKVVAQGSAKVYINDFPAARINDLLACSAEIHTGSPNVIIGGEKEQTDDIEPEIPDWVNWTLLAAGAGAAAVLATPAIAILGTLGGLGGGFAGSLIGGAFFGEGSDGQKWSMLAGGFVGGFAGGKGGAKFDAWRNTKIVEPPPRVTTKVDPISPPRMTLAEAVGQEQAKVWTQTARANAEKNNAQLSTLLTDDQIGAIYGYTTNEGYTALNPALRGQTPLTPELEAFTGHVTDGLNKLPAYNGETYRGTTLPAHILEQNQIGGTVSDGGFMSTSAKTPFDGDVSISVRGNSGKQIDFLSKYKNEAEVLYPPNTRFEVINRIEQNGTTHLLYREIP.

The interval 72–140 is PAAR domain; that stretch reads PRHVTGVLAD…NDLLACSAEI (69 aa). Residues 266–444 enclose the TR mART core domain; it reads MTLAEAVGQE…TTHLLYREIP (179 aa). The interval 274–444 is ART domain; it reads QEQAKVWTQT…TTHLLYREIP (171 aa). Catalysis depends on residues Arg356, Ser381, and Glu415.

It belongs to the Arg-specific ADP-ribosyltransferase family. In terms of assembly, forms a stable complex with cognate immunity protein Tri1-Sp.

Its subcellular location is the secreted. The protein resides in the host cytoplasm. It catalyses the reaction L-arginyl-[protein] + NAD(+) = N(omega)-(ADP-D-ribosyl)-L-arginyl-[protein] + nicotinamide + H(+). Its function is as follows. Toxic component of a contact-dependent interbacterial competition system (also called effector-immunity systems). Acts by ADP-ribosylating a number of target proteins in target cells; E.coli target proteins include FtsZ, EFTu, RNase E, Fis, RL9, SucB, and LolD. FtsZ is thought to be the physiologically relevant target as it is ADP-ribosylated on a critical residue. ADP-ribosylation of FtsZ prevents formation of the FtsZ mid-cell ring and inhibits cell division. Overexpression of the whole Tre1 protein or the ART domain in E.coli is toxic; cells elongate dramatically and some undergo lysis. Toxic activity is neutralized by coexpression of the cognate immunity protein Tri1-Sp; Tri1-Sp neutralizes this protein both by binding to and occluding the active site (via Tri1's N-terminal extension) and by hydrolysis of the ADP-ribosyl moiety from the target protein. Tre1 can also be neutralized by non-cognate immunity protein Tri1-Pp from P.putida strain GB-1, with which it does not form a stable complex; DraG of R.palustris does not neutralize the toxic effects of this protein. In interbacterial competition studies Tri1 from P.putida strain B6-2 also neutralizes this protein. This chain is NAD(+)--protein-arginine ADP-ribosyltransferase Tre1, found in Serratia proteamaculans (strain 568).